The following is a 188-amino-acid chain: Capsid protein (188 aa).

It belongs to the tymoviruses capsid protein family.

The protein resides in the virion. Its function is as follows. Self-assembles to form a T=3 icosahedral capsid composed of 180 copies of the capsid protein. The capsid encapsulates the single-stranded RNA genome. This is Capsid protein from Theobroma cacao (Cacao).